A 247-amino-acid polypeptide reads, in one-letter code: Probable transcriptional regulatory protein LPC_0711 (247 aa).

This sequence belongs to the TACO1 family.

It localises to the cytoplasm. This Legionella pneumophila (strain Corby) protein is Probable transcriptional regulatory protein LPC_0711.